The sequence spans 25 residues: Growth-blocking peptide (25 aa).

The cysteines at positions 7 and 19 are disulfide-linked. Residue Gln-25 is modified to Glutamine amide.

Belongs to the GBP/PSP1/paralytic peptide family. As to expression, hemolymph.

Its function is as follows. Biogenic peptide that prevents, in lepidopteran, the onset of metamorphosis from larva to pupa. This growth-blocking peptide has repressive activity against juvenile hormone esterase. The protein is Growth-blocking peptide of Cotesia kariyai (Parasitic wasp).